The sequence spans 314 residues: MKKKIAEYEVGEQVDVFLLIKTATKGLASNGKPFLTVILQDPSGDIEAKLWDVSPEVEKQYVAETIVKVAGDILNYKGRIQLRVKQIRVANENEVTDISDFVEKAPVKKEDMVEKITQYIFEMRNPNIQRLTRHLLNKHQNEFLEYPAATKNHHEFVSGLAYHVVSMLDLAKAISNLYPSLDKDLLYAGVILHDLGKVIELSGPISTTYTLEGNLLGHISIMVNEIGKAADELNIDAEEVLILQHIVLSHHGKAEWGSPKPPLVKEAEILHYIDNLDAKMNMMDRALGRTKPGEYTERVFALDNRSFYKPTFHN.

The region spanning 163–279 (HVVSMLDLAK…LHYIDNLDAK (117 aa)) is the HD domain.

This sequence belongs to the YhaM family.

Functionally, shows a 3'-5' exoribonuclease activity. The chain is 3'-5' exoribonuclease YhaM from Bacillus cereus (strain G9842).